Reading from the N-terminus, the 129-residue chain is Histone H3-like centromeric protein A (129 aa).

The segment covering 1–14 (MGPRRKPRTPRRRP) has biased composition (basic residues). The disordered stretch occupies residues 1–30 (MGPRRKPRTPRRRPSSPVPGPSRRSSRPGK). The residue at position 2 (glycine 2) is a N,N,N-trimethylglycine. Serine 16, serine 22, and serine 57 each carry phosphoserine. Residues 30 to 129 (KRRKFLWLKE…RIRGIEGGLG (100 aa)) form an H3-like region. The segment at 64–105 (CGKFTRGVDLCWQAQALLALQEAAEAFLVHLFEDAYLLTLHA) is CATD.

The protein belongs to the histone H3 family. Component of centromeric nucleosomes, where DNA is wrapped around a histone octamer core. The octamer contains two molecules each of H2A, H2B, CENPA and H4 assembled in one CENPA-H4 heterotetramer and two H2A-H2B heterodimers. CENPA modulates the DNA-binding characteristics of nucleosomes so that protruding DNA ends have higher flexibility than in nucleosomes containing conventional histone H3. Inhibits binding of histone H1 to nucleosomes, since histone H1 binds preferentially to rigid DNA linkers that protrude from nucleosomes. Nucleosomes containing CENPA also contain histone H2A variants such as MACROH2A and H2A.Z/H2AZ1. The CENPA-H4 heterotetramer is more compact and structurally more rigid than corresponding H3-H4 heterotetramers. Can assemble into nucleosomes that contain both CENPA and histone H3.3; these nucleosomes interact with a single CENPC chain. Heterotrimer composed of HJURP, CENPA and histone H4, where HJURP interacts with the dimer formed by CENPA and histone H4 and prevents tetramerization of CENPA and H4. Component of the CENPA-NAC complex, at least composed of CENPA, CENPC, CENPH, CENPM, CENPN, CENPT and CENPU. Interacts (via CATD domain) with HJURP; the interaction is direct and is required for its localization to centromeres. Interacts with CENPC, CENPN and CENPT; interaction is direct. Part of a centromere complex consisting of CENPA, CENPT and CENPW. Identified in centromere complexes containing histones H2A, H2B and H4, and at least CENPA, CENPB, CENPC, CENPT, CENPN, HJURP, SUPT16H, SSRP1 and RSF1. Can self-associate. The CENPA-H4 heterotetramer can bind DNA by itself (in vitro). Interacts with CDK1, PPP1CA and RBBP7. Trimethylated by NTMT1 at the N-terminal glycine after cleavage of Met-1. Methylation is low before incorporation into nucleosomes and increases with cell cycle progression, with the highest levels in mitotic nucleosomes. In terms of processing, phosphorylated by CDK1 at Ser-57 during early mitosis; this abolishes association with chromatin and centromeres, prevents interaction with HJURP and thereby prevents premature assembly of CENPA into centromeres. Dephosphorylated at Ser-57 by PPP1CA during late mitosis. Post-translationally, poly-ADP-ribosylated by PARP1.

Its subcellular location is the nucleus. The protein resides in the chromosome. The protein localises to the centromere. Functionally, histone H3-like nucleosomal protein that is specifically found in centromeric nucleosomes. Replaces conventional H3 in the nucleosome core of centromeric chromatin that serves as an assembly site for the inner kinetochore. The presence of CENPA subtly modifies the nucleosome structure and the way DNA is wrapped around the nucleosome and gives rise to protruding DNA ends that are less well-ordered and rigid compared to nucleosomes containing histone H3. May serve as an epigenetic mark that propagates centromere identity through replication and cell division. Required for recruitment and assembly of kinetochore proteins, and as a consequence required for progress through mitosis, chromosome segregation and cytokinesis. The polypeptide is Histone H3-like centromeric protein A (CENPA) (Cricetulus griseus (Chinese hamster)).